The sequence spans 350 residues: 3-dehydroquinate synthase (350 aa).

NAD(+) contacts are provided by residues 106–110, 130–131, K143, and K152; these read GVVGD and TS. Positions 185, 246, and 263 each coordinate Zn(2+).

This sequence belongs to the sugar phosphate cyclases superfamily. Dehydroquinate synthase family. It depends on NAD(+) as a cofactor. Co(2+) serves as cofactor. The cofactor is Zn(2+).

It localises to the cytoplasm. It carries out the reaction 7-phospho-2-dehydro-3-deoxy-D-arabino-heptonate = 3-dehydroquinate + phosphate. The protein operates within metabolic intermediate biosynthesis; chorismate biosynthesis; chorismate from D-erythrose 4-phosphate and phosphoenolpyruvate: step 2/7. Its function is as follows. Catalyzes the conversion of 3-deoxy-D-arabino-heptulosonate 7-phosphate (DAHP) to dehydroquinate (DHQ). In Clostridium perfringens (strain 13 / Type A), this protein is 3-dehydroquinate synthase.